Here is a 159-residue protein sequence, read N- to C-terminus: SsrA-binding protein (159 aa).

Positions arginine 140 to arginine 150 are enriched in basic and acidic residues. Residues arginine 140 to arginine 159 form a disordered region.

It belongs to the SmpB family.

The protein resides in the cytoplasm. Functionally, required for rescue of stalled ribosomes mediated by trans-translation. Binds to transfer-messenger RNA (tmRNA), required for stable association of tmRNA with ribosomes. tmRNA and SmpB together mimic tRNA shape, replacing the anticodon stem-loop with SmpB. tmRNA is encoded by the ssrA gene; the 2 termini fold to resemble tRNA(Ala) and it encodes a 'tag peptide', a short internal open reading frame. During trans-translation Ala-aminoacylated tmRNA acts like a tRNA, entering the A-site of stalled ribosomes, displacing the stalled mRNA. The ribosome then switches to translate the ORF on the tmRNA; the nascent peptide is terminated with the 'tag peptide' encoded by the tmRNA and targeted for degradation. The ribosome is freed to recommence translation, which seems to be the essential function of trans-translation. In Alcanivorax borkumensis (strain ATCC 700651 / DSM 11573 / NCIMB 13689 / SK2), this protein is SsrA-binding protein.